We begin with the raw amino-acid sequence, 232 residues long: Platelet-activating factor acetylhydrolase IB subunit alpha1 (232 aa).

The segment at 1–20 is disordered; that stretch reads MSGEGENPASKPTPVQDVQG. Position 2 is an N-acetylserine (Ser2). Ser2 bears the Phosphoserine mark. Residues Ser48, Asp193, and His196 contribute to the active site.

Belongs to the 'GDSL' lipolytic enzyme family. Platelet-activating factor acetylhydrolase IB beta/gamma subunits subfamily. Forms a catalytic dimer which is either homodimer (alpha1/alpha1 homodimer) or heterodimer with PAFAH1B2 (alpha1/alpha2 heterodimer). Component of the cytosolic (PAF-AH (I)) heterotetrameric enzyme, which is composed of PAFAH1B1 (beta), PAFAH1B2 (alpha2) and PAFAH1B3 (alpha1) subunits. The catalytic activity of the enzyme resides in the alpha1 (PAFAH1B3) and alpha2 (PAFAH1B2) subunits, whereas the beta subunit (PAFAH1B1) has regulatory activity. Trimer formation is not essential for the catalytic activity. Interacts with VLDLR; this interaction may modulate the Reelin pathway.

Its subcellular location is the cytoplasm. The enzyme catalyses a 1-O-alkyl-2-acetyl-sn-glycero-3-phosphocholine + H2O = a 1-O-alkyl-sn-glycero-3-phosphocholine + acetate + H(+). It catalyses the reaction 1-O-hexadecyl-2-acetyl-sn-glycero-3-phosphocholine + H2O = 1-O-hexadecyl-sn-glycero-3-phosphocholine + acetate + H(+). It carries out the reaction 1-O-hexadecyl-2-acetyl-sn-glycero-3-phosphate + H2O = 1-O-hexadecyl-sn-glycero-3-phosphate + acetate + H(+). Its activity is regulated as follows. Beta subunit (PAFAH1B1) inhibits the acetylhydrolase activity of the alpha1/alpha1 catalytic homodimer. In terms of biological role, alpha1 catalytic subunit of the cytosolic type I platelet-activating factor (PAF) acetylhydrolase (PAF-AH (I)) heterotetrameric enzyme that catalyzes the hydrolyze of the acetyl group at the sn-2 position of PAF and its analogs and modulates the action of PAF. The activity and substrate specificity of PAF-AH (I) are affected by its subunit composition. Both alpha1/alpha1 homodimer (PAFAH1B3/PAFAH1B3 homodimer) and alpha1/alpha2 heterodimer(PAFAH1B3/PAFAH1B2 heterodimer) hydrolyze 1-O-alkyl-2-acetyl-sn-glycero-3-phosphoric acid (AAGPA) more efficiently than PAF, but they have little hydrolytic activity towards 1-O-alkyl-2-acetyl-sn-glycero-3-phosphorylethanolamine (AAGPE). Plays an important role during the development of brain. The sequence is that of Platelet-activating factor acetylhydrolase IB subunit alpha1 from Mus musculus (Mouse).